An 83-amino-acid polypeptide reads, in one-letter code: NAD(P)H-quinone oxidoreductase subunit L (83 aa).

Helical transmembrane passes span 15–35 (LLVL…VPLA) and 53–73 (LGIY…APFL).

This sequence belongs to the complex I NdhL subunit family. NDH-1 can be composed of about 15 different subunits; different subcomplexes with different compositions have been identified which probably have different functions.

It is found in the cellular thylakoid membrane. It carries out the reaction a plastoquinone + NADH + (n+1) H(+)(in) = a plastoquinol + NAD(+) + n H(+)(out). The enzyme catalyses a plastoquinone + NADPH + (n+1) H(+)(in) = a plastoquinol + NADP(+) + n H(+)(out). Functionally, NDH-1 shuttles electrons from an unknown electron donor, via FMN and iron-sulfur (Fe-S) centers, to quinones in the respiratory and/or the photosynthetic chain. The immediate electron acceptor for the enzyme in this species is believed to be plastoquinone. Couples the redox reaction to proton translocation, and thus conserves the redox energy in a proton gradient. Cyanobacterial NDH-1 also plays a role in inorganic carbon-concentration. This Synechococcus sp. (strain CC9605) protein is NAD(P)H-quinone oxidoreductase subunit L.